We begin with the raw amino-acid sequence, 809 residues long: Integrin beta pat-3 (809 aa).

The first 19 residues, 1 to 19, serve as a signal peptide directing secretion; that stretch reads MPPSTSLLLLAALLPFALP. At 20 to 737 the chain is on the extracellular side; it reads ASDWKTGEVT…KHKDCPPPVP (718 aa). Residues asparagine 47, asparagine 141, asparagine 269, asparagine 373, and asparagine 400 are each glycosylated (N-linked (GlcNAc...) asparagine). Residues 153 to 352 enclose the VWFA domain; that stretch reads DLYYLMDLSY…IFAVTKNNQD (200 aa). Intrachain disulfides connect cysteine 476–cysteine 496, cysteine 489–cysteine 499, cysteine 501–cysteine 510, cysteine 512–cysteine 543, cysteine 526–cysteine 541, cysteine 535–cysteine 546, cysteine 548–cysteine 563, cysteine 565–cysteine 586, cysteine 570–cysteine 584, cysteine 578–cysteine 589, cysteine 591–cysteine 600, cysteine 602–cysteine 625, cysteine 609–cysteine 623, cysteine 617–cysteine 628, and cysteine 630–cysteine 644. 4 consecutive I-EGF domains span residues 476–511, 512–564, 565–601, and 602–645; these read CERQ…KYCE, CNRP…EFCE, CDNF…RACE, and CPIS…AKCE. A glycan (N-linked (GlcNAc...) asparagine) is linked at asparagine 530. N-linked (GlcNAc...) asparagine glycosylation is found at asparagine 672, asparagine 693, and asparagine 721. The helical transmembrane segment at 738–758 threads the bilayer; it reads VLAIVLGVIAGIVILGILLLL. Residues 759–809 lie on the Cytoplasmic side of the membrane; it reads LWKLLTVLHDRSEYATFNNERLMAKWDTNENPIYKQATTTFKNPVYAGKAN. At tyrosine 792 the chain carries Phosphotyrosine.

Belongs to the integrin beta chain family. In terms of assembly, heterodimer of an alpha and a beta subunit. Interacts with alpha subunit ina-1. Interacts with alpha subunit pat-2. Component of an integrin containing attachment complex, composed of at least pat-2, pat-3, pat-4, pat-6, unc-52, unc-97 and unc-112. May interact with tns-1 (via C-terminus). Post-translationally, phosphorylated. Dephosphorylated by dep-1. Expressed in body wall muscles (at protein level). Expressed in gonadal sheath cells and spermatheca. Expressed in vulval cells and along the basal laminae that separate the vulval cells from the uterus (at the protein level).

The protein localises to the cell membrane. The protein resides in the lateral cell membrane. It localises to the basolateral cell membrane. It is found in the cytoplasm. Its subcellular location is the myofibril. The protein localises to the sarcomere. The protein resides in the m line. It localises to the cell junction. It is found in the focal adhesion. Its function is as follows. Integrin alpha ina-1/beta pat-3 is a receptor for laminin. Integrin alpha pat-2/beta pat-3 recognizes the sequence R-G-D in its ligands. Plays a role in cell migration, morphogenesis and probably in cell-cell interactions. During gonad morphogenesis, involved in distal tip cell (DTC)-mediated guidance of gonad elongation, in maintaining their sharp tapering morphology and in their migration. Component of an integrin containing attachment complex, which is required for muscle development and maintenance. Involved in the assembly of dense bodies and M lines during body wall muscle embryonic development by recruiting one of their components, cpna-1, to integrin-mediated attachment sites. May play a similar role in the assembly of dense bodies in gonadal myoepithelial sheath cells. Probably by acting as a receptor for apoptotic cells, plays a role in the clearance of apoptotic cells during mid-embryogenesis. Required for ovulation. Dephosphorylated, probably within the alpha pat-2/beta pat-3 integrin receptor complex, by the phosphatase dep-1, which leads to down-stream effects including the negative regulation of let-23 signaling and vulval induction. When unphosphosphorylated, recruits the cytoplasmic adapter protein tln-1 to the plasma membrane of secondary vulval precursor cells. This promotes the linking of focal adhesion sites to the F-actin cytoskeleton, and it also acts to restrict the mobility of the let-23 receptor on the plasma membrane of vulval cells which thereby attenuates let-23 signaling. Plays a role in axon regeneration after injury. The protein is Integrin beta pat-3 of Caenorhabditis elegans.